A 74-amino-acid polypeptide reads, in one-letter code: Brevinin-2Ta (74 aa).

The N-terminal stretch at 1–22 (MFTMKKSLLLFFFLGTISLSLC) is a signal peptide. Positions 23-41 (QEERNADEDDGEMTEEEKR) are excised as a propeptide. Cys68 and Cys74 are oxidised to a cystine.

Belongs to the frog skin active peptide (FSAP) family. Brevinin subfamily. In terms of tissue distribution, expressed by the skin glands.

The protein resides in the secreted. Antimicrobial peptide. The polypeptide is Brevinin-2Ta (Rana temporaria (European common frog)).